Here is a 111-residue protein sequence, read N- to C-terminus: Small ribosomal subunit protein bS18 (111 aa).

The disordered stretch occupies residues 1 to 32 (MDLENTENVENNNNNEEEVKAKGERKAHFNKE). Basic and acidic residues predominate over residues 17 to 32 (EEVKAKGERKAHFNKE).

This sequence belongs to the bacterial ribosomal protein bS18 family. Part of the 30S ribosomal subunit. Forms a tight heterodimer with protein bS6.

Its function is as follows. Binds as a heterodimer with protein bS6 to the central domain of the 16S rRNA, where it helps stabilize the platform of the 30S subunit. The protein is Small ribosomal subunit protein bS18 of Brachyspira hyodysenteriae (strain ATCC 49526 / WA1).